The sequence spans 616 residues: Probable beta-hexosaminidase ARB_01353 (616 aa).

The N-terminal stretch at 1-20 is a signal peptide; that stretch reads MRFAKALAITAVLLSGVVEA. The interval 96-117 is disordered; the sequence is KFDPFPDQSSKPKEKRQNAPPG. Asn-333 carries an N-linked (GlcNAc...) asparagine glycan. Catalysis depends on Glu-361, which acts as the Proton donor.

The protein belongs to the glycosyl hydrolase 20 family.

Its subcellular location is the secreted. It catalyses the reaction Hydrolysis of terminal non-reducing N-acetyl-D-hexosamine residues in N-acetyl-beta-D-hexosaminides.. Its function is as follows. Beta-hexosaminidase that shows a broad substrate specificity. This chain is Probable beta-hexosaminidase ARB_01353, found in Arthroderma benhamiae (strain ATCC MYA-4681 / CBS 112371) (Trichophyton mentagrophytes).